The sequence spans 195 residues: Large ribosomal subunit protein uL5 (195 aa).

It belongs to the universal ribosomal protein uL5 family. As to quaternary structure, part of the 50S ribosomal subunit; part of the 5S rRNA/L5/L18/L25 subcomplex. Contacts the 5S rRNA and the P site tRNA. Forms a bridge to the 30S subunit in the 70S ribosome.

Functionally, this is one of the proteins that bind and probably mediate the attachment of the 5S RNA into the large ribosomal subunit, where it forms part of the central protuberance. In the 70S ribosome it contacts protein S13 of the 30S subunit (bridge B1b), connecting the 2 subunits; this bridge is implicated in subunit movement. Contacts the P site tRNA; the 5S rRNA and some of its associated proteins might help stabilize positioning of ribosome-bound tRNAs. This is Large ribosomal subunit protein uL5 from Pelodictyon phaeoclathratiforme (strain DSM 5477 / BU-1).